The primary structure comprises 149 residues: 3-dehydroquinate dehydratase (149 aa).

Catalysis depends on Y26, which acts as the Proton acceptor. Substrate-binding residues include N77, H83, and D90. H103 serves as the catalytic Proton donor. Residues 104–105 and R114 each bind substrate; that span reads LS.

Belongs to the type-II 3-dehydroquinase family. Homododecamer.

It carries out the reaction 3-dehydroquinate = 3-dehydroshikimate + H2O. It participates in metabolic intermediate biosynthesis; chorismate biosynthesis; chorismate from D-erythrose 4-phosphate and phosphoenolpyruvate: step 3/7. Functionally, catalyzes a trans-dehydration via an enolate intermediate. This chain is 3-dehydroquinate dehydratase, found in Haemophilus influenzae (strain PittEE).